Here is a 458-residue protein sequence, read N- to C-terminus: Siroheme synthase (458 aa).

Residues 1–203 (MDYLPLFFDL…GNLAAAEQLI (203 aa)) form a precorrin-2 dehydrogenase /sirohydrochlorin ferrochelatase region. NAD(+) is bound by residues 22-23 (TI) and 43-44 (PK). A Phosphoserine modification is found at Ser-128. A uroporphyrinogen-III C-methyltransferase region spans residues 216 to 458 (GEVYLVGAGP…RCHEKLNWYK (243 aa)). S-adenosyl-L-methionine is bound at residue Pro-225. The active-site Proton acceptor is Asp-248. Lys-270 functions as the Proton donor in the catalytic mechanism. S-adenosyl-L-methionine-binding positions include 301-303 (GGD), Ile-306, 331-332 (TA), Met-383, and Gly-412.

The protein in the N-terminal section; belongs to the precorrin-2 dehydrogenase / sirohydrochlorin ferrochelatase family. In the C-terminal section; belongs to the precorrin methyltransferase family.

It carries out the reaction uroporphyrinogen III + 2 S-adenosyl-L-methionine = precorrin-2 + 2 S-adenosyl-L-homocysteine + H(+). It catalyses the reaction precorrin-2 + NAD(+) = sirohydrochlorin + NADH + 2 H(+). The catalysed reaction is siroheme + 2 H(+) = sirohydrochlorin + Fe(2+). Its pathway is cofactor biosynthesis; adenosylcobalamin biosynthesis; precorrin-2 from uroporphyrinogen III: step 1/1. The protein operates within cofactor biosynthesis; adenosylcobalamin biosynthesis; sirohydrochlorin from precorrin-2: step 1/1. It functions in the pathway porphyrin-containing compound metabolism; siroheme biosynthesis; precorrin-2 from uroporphyrinogen III: step 1/1. It participates in porphyrin-containing compound metabolism; siroheme biosynthesis; siroheme from sirohydrochlorin: step 1/1. Its pathway is porphyrin-containing compound metabolism; siroheme biosynthesis; sirohydrochlorin from precorrin-2: step 1/1. In terms of biological role, multifunctional enzyme that catalyzes the SAM-dependent methylations of uroporphyrinogen III at position C-2 and C-7 to form precorrin-2 via precorrin-1. Then it catalyzes the NAD-dependent ring dehydrogenation of precorrin-2 to yield sirohydrochlorin. Finally, it catalyzes the ferrochelation of sirohydrochlorin to yield siroheme. The chain is Siroheme synthase from Saccharophagus degradans (strain 2-40 / ATCC 43961 / DSM 17024).